The primary structure comprises 100 residues: uncharacterized protein (100 aa).

This is an uncharacterized protein from Rickettsia prowazekii (strain Madrid E).